Here is a 420-residue protein sequence, read N- to C-terminus: Odorant receptor 63a (420 aa).

Residues 1-43 (MYSPEEAAELKRRNYRSIREMIRLSYTVGFNLLDPSRCGQVLR) are Cytoplasmic-facing. A helical transmembrane segment spans residues 44 to 64 (IWTIVLSVSSLASLYGHWQML). Residues 65-76 (ARYIHDIPRIGE) are Extracellular-facing. The chain crosses the membrane as a helical span at residues 77–97 (TAGTALQFLTSIAKMWYFLFA). Over 98-150 (HRQIYELLRKARCHELLQKCELFERMSDLPVIKEIRQQVESTMNRYWASTRRQ) the chain is Cytoplasmic. Residues 151–171 (ILIYLYSCICITTNYFINSFV) traverse the membrane as a helical segment. Over 172–217 (INLYRYFTKPKGSYDIMLPLPSLYPAWEHKGLEFPYYHIQMYLETC) the chain is Extracellular. The helical transmembrane segment at 218 to 238 (SLYICGMCAVSFDGVFIVLCL) threads the bilayer. At 239–296 (HSVGLMRSLNQMVEQATSELVPPDRRVEYLRCCIYQYQRVANFATEVNNCFRHITFTQ) the chain is on the cytoplasmic side. Residues 297-317 (FLLSLFNWGLALFQMSVGLGN) traverse the membrane as a helical segment. Asparagine 318 carries an N-linked (GlcNAc...) asparagine glycan. At 318–320 (NSS) the chain is on the extracellular side. Residues 321-341 (ITMIRMTMYLVAAGYQIVVYC) traverse the membrane as a helical segment. The Cytoplasmic portion of the chain corresponds to 342 to 387 (YNGQRFATASEEIANAFYQVRWYGESREFRHLIRMMLMRTNRGFRL). The helical transmembrane segment at 388–408 (DVSWFMQMSLPTLMAMVRTSG) threads the bilayer. Residues 409 to 420 (QYFLLLQNVNQK) are Extracellular-facing.

It belongs to the insect chemoreceptor superfamily. Heteromeric odorant receptor channel (TC 1.A.69) family. Or63a subfamily. In terms of assembly, interacts with Orco. Complexes exist early in the endomembrane system in olfactory sensory neurons (OSNs), coupling these complexes to the conserved ciliary trafficking pathway.

The protein localises to the cell membrane. Functionally, odorant receptor which mediates acceptance or avoidance behavior, depending on its substrates. The odorant receptor repertoire encodes a large collection of odor stimuli that vary widely in identity, intensity, and duration. May form a complex with Orco to form odorant-sensing units, providing sensitive and prolonged odorant signaling and calcium permeability. Involved in the behavioral responses to butyl acetate, isoamyl acetate, and hexanoic acid. The sequence is that of Odorant receptor 63a (Or63a) from Drosophila melanogaster (Fruit fly).